A 173-amino-acid polypeptide reads, in one-letter code: Large ribosomal subunit protein uL10 (173 aa).

This sequence belongs to the universal ribosomal protein uL10 family. In terms of assembly, part of the ribosomal stalk of the 50S ribosomal subunit. The N-terminus interacts with L11 and the large rRNA to form the base of the stalk. The C-terminus forms an elongated spine to which L12 dimers bind in a sequential fashion forming a multimeric L10(L12)X complex.

Functionally, forms part of the ribosomal stalk, playing a central role in the interaction of the ribosome with GTP-bound translation factors. The sequence is that of Large ribosomal subunit protein uL10 from Geobacter sp. (strain M21).